Consider the following 1410-residue polypeptide: DNA-directed RNA polymerase subunit beta' (1410 aa).

Residues C70, C72, C85, and C88 each contribute to the Zn(2+) site. D460, D462, and D464 together coordinate Mg(2+). Positions 814, 888, 895, and 898 each coordinate Zn(2+).

This sequence belongs to the RNA polymerase beta' chain family. In terms of assembly, the RNAP catalytic core consists of 2 alpha, 1 beta, 1 beta' and 1 omega subunit. When a sigma factor is associated with the core the holoenzyme is formed, which can initiate transcription. Mg(2+) serves as cofactor. Zn(2+) is required as a cofactor.

The catalysed reaction is RNA(n) + a ribonucleoside 5'-triphosphate = RNA(n+1) + diphosphate. Functionally, DNA-dependent RNA polymerase catalyzes the transcription of DNA into RNA using the four ribonucleoside triphosphates as substrates. The protein is DNA-directed RNA polymerase subunit beta' of Saccharophagus degradans (strain 2-40 / ATCC 43961 / DSM 17024).